Here is a 571-residue protein sequence, read N- to C-terminus: Proline--tRNA ligase (571 aa).

This sequence belongs to the class-II aminoacyl-tRNA synthetase family. ProS type 1 subfamily. Homodimer.

The protein localises to the cytoplasm. The catalysed reaction is tRNA(Pro) + L-proline + ATP = L-prolyl-tRNA(Pro) + AMP + diphosphate. Functionally, catalyzes the attachment of proline to tRNA(Pro) in a two-step reaction: proline is first activated by ATP to form Pro-AMP and then transferred to the acceptor end of tRNA(Pro). As ProRS can inadvertently accommodate and process non-cognate amino acids such as alanine and cysteine, to avoid such errors it has two additional distinct editing activities against alanine. One activity is designated as 'pretransfer' editing and involves the tRNA(Pro)-independent hydrolysis of activated Ala-AMP. The other activity is designated 'posttransfer' editing and involves deacylation of mischarged Ala-tRNA(Pro). The misacylated Cys-tRNA(Pro) is not edited by ProRS. In Shewanella sp. (strain W3-18-1), this protein is Proline--tRNA ligase.